Here is a 111-residue protein sequence, read N- to C-terminus: MEQNKDPQMISKHNSRLPIWVLSPREEQQARKNLKTETYKKCANFVQAMADCAKANGMKVFPTCDKQRDEMKSCLLFYQTDEKYLDGERDKIVLEKINKLEKLCQKQSSTK.

Positions 39-82 (YKKCANFVQAMADCAKANGMKVFPTCDKQRDEMKSCLLFYQTDE) constitute a CHCH domain. 2 short sequence motifs (cx9C motif) span residues 42 to 52 (CANFVQAMADC) and 64 to 74 (CDKQRDEMKSC). 2 disulfides stabilise this stretch: Cys-42–Cys-74 and Cys-52–Cys-64.

Belongs to the CMC family.

The protein resides in the mitochondrion inner membrane. Functionally, required for mitochondrial cytochrome c oxidase (COX) assembly and respiration. Binds copper. May be involved in copper trafficking and distribution to mitochondrial COX and SOD1. This is COX assembly mitochondrial protein (CMC1) from Saccharomyces cerevisiae (strain RM11-1a) (Baker's yeast).